A 431-amino-acid chain; its full sequence is tRNA(Ile)-lysidine synthase (431 aa).

26 to 31 (SGGVDS) serves as a coordination point for ATP.

It belongs to the tRNA(Ile)-lysidine synthase family.

It is found in the cytoplasm. It catalyses the reaction cytidine(34) in tRNA(Ile2) + L-lysine + ATP = lysidine(34) in tRNA(Ile2) + AMP + diphosphate + H(+). Ligates lysine onto the cytidine present at position 34 of the AUA codon-specific tRNA(Ile) that contains the anticodon CAU, in an ATP-dependent manner. Cytidine is converted to lysidine, thus changing the amino acid specificity of the tRNA from methionine to isoleucine. This is tRNA(Ile)-lysidine synthase from Wolbachia pipientis wMel.